The primary structure comprises 1038 residues: MAQTPNPSRRSLVGPPPHPFLTPRPERRQLELRWADGGSQSSARRSGVGLTGGGGGGGGGSEMKDCEANVQVVLRCRPLSEEEQRANVQSAISCDDLKREVTVLHSLFKQADKTFTFDKVFGPKAQQRSIYDRAVKPIVKDVLEGYNCTVFAFGQTGTGKTYTMEGEMRQKASELSATAGVIPRAVRDIFDILEERKADYSMKVTFLELYNEEITDLLALEDQSRFPEDRQKRAISLMEDRKGGAVIRGLEEVVVYSASEIYNLLEHGSARRRTADTALNKQSSRSHSVFSIYIHVKETTVGNQELLKCGRLNLVDLAGSENIARSGAREGRAREAGEMNKSLLTLGRVITALVEHSVHVPYRDSKLTRLLRESLGGKAKTCIIATVSPSIHCLEETVVTLDYAYRAKSIKNKPEANQKVCKSVILKDLYQEMERMKQDVKAAREKNGIYIPQERFALEEAEKKTMRDKIEYLETQNKELKMNIESCKKEYLDLEEAHSRANISLKEKEFIISNLLHAEQSIVERAKDIRGALENASGDISALVDKLGRQSNTEAENKGLLFDFRSQLDHGLDLLHDTVVGCVCEQRQFLESMNEQNKIYFSAKSESTSQLERRIAKAKDIYASGVQCMNQLANTLHQRSIAHSEQMGLNILSHATRAANFLAVMVSEAEQVSNDVFKSISELKELLAFSADQQEVMFKRDLVSAQVMSKTSIDFFEDIRGHASRLIEHMEQSQAESSSQLLKFEEDFKELSVREEQAALDKIAGILAGLTAKKSTMVLDCVGQLNGKCREEQKHLKLQISNLQKVSDSGGKEAAAYAAKVESQFSEDKLSHCKIKDQMEDILQQSLKKTVHSVSYWSHTETSLEHLNKISVVEADDFIEETRKENESILQKMLIVSTQNDAKFAAITSDMLTAVKDSHLRDSESRMRIETVFATSSDHLEMLDTKHSQGTESIRSMTAKCLERDYKANSPVRRRPGELMTNAYSLESIEQLRTPVPDLVVKFRSENNLDEVDKGKRYVDQGTRTPRSPLMPVNHYNK.

Residues 1–63 (MAQTPNPSRR…GGGGGGGSEM (63 aa)) form a disordered region. Basic and acidic residues predominate over residues 24 to 34 (RPERRQLELRW). A compositionally biased stretch (gly residues) spans 49 to 61 (GLTGGGGGGGGGS). One can recognise a Kinesin motor domain in the interval 69–410 (NVQVVLRCRP…LDYAYRAKSI (342 aa)). 154-161 (GQTGTGKT) contributes to the ATP binding site. Positions 453-502 (QERFALEEAEKKTMRDKIEYLETQNKELKMNIESCKKEYLDLEEAHSRAN) form a coiled coil. The disordered stretch occupies residues 1013–1038 (DKGKRYVDQGTRTPRSPLMPVNHYNK).

It belongs to the TRAFAC class myosin-kinesin ATPase superfamily. Kinesin family. KIN-5/BimC subfamily.

The protein localises to the cytoplasm. It localises to the cytoskeleton. The protein resides in the spindle. Functionally, responsible for microtubule translocation. May be important for the organization of phragmoplast-specific arrays of microtubules. Plays an essential role in stabilizing the mitotic spindle. Required during mitotic cytokinesis. This is Kinesin-like protein KIN-5B from Oryza sativa subsp. japonica (Rice).